Consider the following 679-residue polypeptide: E3 ubiquitin ligase RNF157 (679 aa).

Residue Gly-2 is the site of N-myristoyl glycine attachment. The segment at 277–316 (CVVCLSDVRDTLILPCRHLCLCNTCADTLRYQANNCPICR) adopts an RING-type zinc-finger fold. The D-box 1 signature appears at 329-332 (RKKL). Polar residues-rich tracts occupy residues 339–349 (SFNPIISSQTS) and 478–537 (ESEN…SMSG). Disordered stretches follow at residues 339 to 362 (SFNPIISSQTSDSEEHPSSENIPP), 416 to 604 (LDRL…TQEG), and 650 to 679 (VSRNAQRRRLSSSSLEDSETRPCVWGPLAV). Over residues 585–598 (QDAEGNDVIEEEDG) the composition is skewed to acidic residues. A D-box 2 motif is present at residues 656-659 (RRRL). A phosphoserine mark is found at Ser-660, Ser-661, Ser-662, and Ser-663.

In terms of assembly, interacts with APBB1. Interacts with CHD1; CHD1-binding controls RNF157 stability. Interacts with ATRN, MEGF8, TECR, MSI2, PLRG1, BYSL, MTERF3, PSMA1, MRPS18B, PRPF4, FASTKD2, SLC25A1, SMU1, CNOT9, MRPS2, MAGT1, FXR2, EMD, PSMD8, HDAC1, RAN, HSD17B12, TXNDC5 and MRPL19. Post-translationally, phosphorylation at Ser-660, Ser-661, Ser-662 and Ser-663 downstream of the PI3K and MAPK pathways influences the E3 ligase activity and stability of RNF157 during the cell cycle in an anaphase-promoting complex/cyclosome-CDH1-dependent manner.

The protein resides in the cytoplasm. The catalysed reaction is S-ubiquitinyl-[E2 ubiquitin-conjugating enzyme]-L-cysteine + [acceptor protein]-L-lysine = [E2 ubiquitin-conjugating enzyme]-L-cysteine + N(6)-ubiquitinyl-[acceptor protein]-L-lysine.. Its function is as follows. E3 ubiquitin ligase that ubiquitinates APBB1 for its degradation by the proteasome and thus prevents apoptosis and promotes survival of neurons. Has a dual role in neurons as it is also required for dendrite growth and maintenance for which its ligase activity is not critical. May act as a scaffold molecule to regulate this process. Acts as a downstream effector of the interconnected PI3K and MAPK signaling pathways and thus participates in the regulation of the cell cycle. This Homo sapiens (Human) protein is E3 ubiquitin ligase RNF157 (RNF157).